The primary structure comprises 575 residues: MMEITRETMSFTSTTPSARAPLGGRTTGNVTSQDRMLKIVTEMRSGAGSGLSPFGQNAASTIRDSREREKKEMSDLNDRLASYIEKVRFLEAQNRKLAADLDALRSKWGKDTHNIRNMYEGELVDAQKLIDETNKQRKDMEGQLKKMQDELAEMRRKLEDATKGREQDRAKIDALLVTLSNLEAEISLLKRRIAQLEDEVKRIKQENQRLLSELQRARTDLDQETLNRIDYQNQVQTLLEEIDFLRRVHDNEIKELQTLASRDTTPENREFFKNELSSAIRDIREEYDQVNNVHRNDMESWYRLKVQEIQTQSARQNMEQGYAKEEVKRLRTQLSDLRGKLADLESRNSLLEKQIQELNYQLEDDQRSYEAALNDRDSQIRKMREECQALMVELQMLLDTKQTLDAEIAIYRKMLEGEENRAGLKQLVEQVVKTHAITQETDTETMRVVKGETASRQSFQRSAKGNVSIHEASPDGKFIVLQNTHRAKDEAIGEWKLKRRIDGKRENVYTLPRDFVLRAGKTLKIFARNQGVASPPDQLVYDAEDSFGSGNNVQTILFNKEGEERATHIQRQSTA.

Disordered stretches follow at residues 1-30 (MMEI…TGNV) and 45-72 (SGAG…EKKE). The head stretch occupies residues 1–72 (MMEITRETMS…RDSREREKKE (72 aa)). Residues 7–17 (ETMSFTSTTPS) show a composition bias toward polar residues. Over residues 63–72 (RDSREREKKE) the composition is skewed to basic and acidic residues. An IF rod domain is found at 69 to 422 (EKKEMSDLND…KMLEGEENRA (354 aa)). A coil 1A region spans residues 73–104 (MSDLNDRLASYIEKVRFLEAQNRKLAADLDAL). Positions 105–118 (RSKWGKDTHNIRNM) are linker 1. The tract at residues 119 to 256 (YEGELVDAQK…RVHDNEIKEL (138 aa)) is coil 1B. Residues 257 to 274 (QTLASRDTTPENREFFKN) are linker 12. The segment at 275-422 (ELSSAIRDIR…KMLEGEENRA (148 aa)) is coil 2. Residues 423–572 (GLKQLVEQVV…EERATHIQRQ (150 aa)) are tail. The LTD domain occupies 455–572 (SRQSFQRSAK…EERATHIQRQ (118 aa)).

Belongs to the intermediate filament family. Forms some heteromeric filaments with ifb-1. Isoform d is abundantly expressed in the marginal cells of the pharynx, forming apicobasally oriented thick filament bundles that are attached to the apical and basal plasma membrane by hemi-adherens junctions. Expression of isoform c is also seen in the excretory cells and in the uterus. Isoform c is detectable in the amphid sensory neurins and the pharyngeal-intestinal valve. Both isoform c and isoform d are expressed in the rectum and vulva and in some neurons of the tail. In larvae, expression is seen in the excretory cell, the vulva, the rectum and in the thick filament bundles of the pharynx. Expression in pharynx begins in late embryos.

The protein localises to the cytoplasm. Cytoplasmic intermediate filaments make up the structural component of the cytoskeleton providing mechanical strength to cells. Essential protein required during embryogenesis especially for survival past the L1 larva stage, involved in intestine morphogenesis. This chain is Intermediate filament protein ifa-1 (ifa-1), found in Caenorhabditis elegans.